We begin with the raw amino-acid sequence, 310 residues long: Putrescinyltransferase (310 aa).

Belongs to the thymidine aminotransferase family.

It catalyses the reaction 5-phosphomethyl-dUMP in DNA + putrescine = 5-N(alpha)-putrescinyl-dTMP in DNA + phosphate. In terms of biological role, transfers putrescine to 5-phosphomethyl-2'-deoxyuridine (5-PmdU) to produce 5-Nalpha-putrescinylthymidine (Nalpha-PutT) as a step in the pathway leading to thymidine hypermodifications in the viral genome. As a final result of the pathway of hypermodification, Nalpha-PutT substitutes for about 50% of thymidines in the viral DNA. These modifications probably prevent degradation of viral genome by the host restriction-modification antiviral defense system. The chain is Putrescinyltransferase from Delftia phage PhiW-14 (Deftia acidovorans bacteriophage phiW-14).